Here is a 400-residue protein sequence, read N- to C-terminus: Large envelope protein (400 aa).

Position 1 is an N-acetylmethionine (Met-1). Gly-2 is lipidated: N-myristoyl glycine; by host. Positions 2–119 (GAPLSTARRG…PPLRDTHPQA (118 aa)) are pre-S1. The interval 2-174 (GAPLSTARRG…FSKTGDPAMN (173 aa)) is pre-S. Over 2–181 (GAPLSTARRG…AMNMENITSG (180 aa)) the chain is Virion surface; in external conformation. Topologically, residues 2 to 253 (GAPLSTARRG…PGYRWMCLRR (252 aa)) are intravirion; in internal conformation. N-linked (GlcNAc...) asparagine glycosylation occurs at Pro-4. The disordered stretch occupies residues 70–115 (PHGGLLGWSPQAQGILTTSPPDPPPASTNRRSGRKPTPVSPPLRDT). Polar residues predominate over residues 79-88 (PQAQGILTTS). Positions 120 to 174 (MQWNSTQFHQALLDPRVRGLYFPAGGSSSETQNPVPTIASLTSSIFSKTGDPAMN) are pre-S2. The chain crosses the membrane as a helical span at residues 182-202 (LLGPLLVLQAVCFLLTKILTI). Over 203-253 (PQSLDSWWTSLNFLGVPPGCPGQNSQSPISNHLPTSCPPTCPGYRWMCLRR) the chain is Intravirion; in external conformation. A helical membrane pass occupies residues 254–274 (FIIFLFILLLCLIFLLVLLDY). The Virion surface segment spans residues 275–348 (QGMLPVCPLL…WASARFSWLS (74 aa)). N-linked (GlcNAc...) asparagine; by host glycosylation is present at Asn-320. Residues 349–369 (LLVQFVQWCVGLSPTVWLLVI) traverse the membrane as a helical segment. Residues 370–375 (WMIWYW) lie on the Intravirion side of the membrane. A helical transmembrane segment spans residues 376-398 (GPNLCSILSPFIPLLPIFCYLWA). The Virion surface portion of the chain corresponds to 399-400 (SI).

The protein belongs to the orthohepadnavirus major surface antigen family. In its internal form (Li-HBsAg), interacts with the capsid protein and with the isoform S. Interacts with host chaperone CANX. As to quaternary structure, associates with host chaperone CANX through its pre-S2 N glycan; this association may be essential for isoform M proper secretion. In terms of assembly, interacts with isoform L. Interacts with the antigens of satellite virus HDV (HDVAgs); this interaction is required for encapsidation of HDV genomic RNA. Isoform M is N-terminally acetylated by host at a ratio of 90%, and N-glycosylated by host at the pre-S2 region. In terms of processing, myristoylated.

The protein localises to the virion membrane. Its function is as follows. The large envelope protein exists in two topological conformations, one which is termed 'external' or Le-HBsAg and the other 'internal' or Li-HBsAg. In its external conformation the protein attaches the virus to cell receptors and thereby initiating infection. This interaction determines the species specificity and liver tropism. This attachment induces virion internalization predominantly through caveolin-mediated endocytosis. The large envelope protein also assures fusion between virion membrane and endosomal membrane. In its internal conformation the protein plays a role in virion morphogenesis and mediates the contact with the nucleocapsid like a matrix protein. In terms of biological role, the middle envelope protein plays an important role in the budding of the virion. It is involved in the induction of budding in a nucleocapsid independent way. In this process the majority of envelope proteins bud to form subviral lipoprotein particles of 22 nm of diameter that do not contain a nucleocapsid. In Homo sapiens (Human), this protein is Large envelope protein.